The sequence spans 128 residues: Azurin (128 aa).

Residues 1–128 (AECSVDIQGN…AMMKGTLTLK (128 aa)) enclose the Plastocyanin-like domain. 4 residues coordinate Cu cation: His46, Cys112, His117, and Met121.

It localises to the periplasm. Transfers electrons from cytochrome c551 to cytochrome oxidase. The chain is Azurin from Pseudomonas denitrificans.